The primary structure comprises 602 residues: Elongation factor 4 (602 aa).

One can recognise a tr-type G domain in the interval 7–189; that stretch reads ARLRNFCIIA…SVVDRIPPPK (183 aa). Residues 19-24 and 136-139 each bind GTP; these read DHGKST and NKVD.

This sequence belongs to the TRAFAC class translation factor GTPase superfamily. Classic translation factor GTPase family. LepA subfamily.

It is found in the cell inner membrane. The catalysed reaction is GTP + H2O = GDP + phosphate + H(+). In terms of biological role, required for accurate and efficient protein synthesis under certain stress conditions. May act as a fidelity factor of the translation reaction, by catalyzing a one-codon backward translocation of tRNAs on improperly translocated ribosomes. Back-translocation proceeds from a post-translocation (POST) complex to a pre-translocation (PRE) complex, thus giving elongation factor G a second chance to translocate the tRNAs correctly. Binds to ribosomes in a GTP-dependent manner. This is Elongation factor 4 from Prochlorococcus marinus (strain SARG / CCMP1375 / SS120).